We begin with the raw amino-acid sequence, 90 residues long: MARITVEDCLDYVDNRFELVIVGSKRARQIATQGKEPLVAPENDKPTVIALREIELGLIDDAFLAATDAEPVEHFAEPSEENADNLYPEA.

It belongs to the RNA polymerase subunit omega family. The RNAP catalytic core consists of 2 alpha, 1 beta, 1 beta' and 1 omega subunit. When a sigma factor is associated with the core the holoenzyme is formed, which can initiate transcription.

It catalyses the reaction RNA(n) + a ribonucleoside 5'-triphosphate = RNA(n+1) + diphosphate. Functionally, promotes RNA polymerase assembly. Latches the N- and C-terminal regions of the beta' subunit thereby facilitating its interaction with the beta and alpha subunits. The sequence is that of DNA-directed RNA polymerase subunit omega from Saccharophagus degradans (strain 2-40 / ATCC 43961 / DSM 17024).